Consider the following 307-residue polypeptide: Streptomycin 6-kinase (307 aa).

133–145 (LAGLLARLVSVPA) is a streptomycin binding site. Residue D201 is the Proton acceptor of the active site.

This sequence belongs to the aminoglycoside phosphotransferase family.

It catalyses the reaction streptomycin + ATP = streptomycin 6-phosphate + ADP + H(+). Functionally, the aminoglycoside phosphotransferases achieve inactivation of their antibiotic substrates by phosphorylation. The polypeptide is Streptomycin 6-kinase (sph) (Streptomyces glaucescens).